A 489-amino-acid polypeptide reads, in one-letter code: Ubiquitin carboxyl-terminal hydrolase 14 (489 aa).

The USP domain maps to 102 to 458; that stretch reads CGLANLGNTC…SAYVLLYEAR (357 aa). C111 acts as the Nucleophile in catalysis. H409 acts as the Proton acceptor in catalysis. Positions 467–489 are disordered; sequence PPAPVPTEVAADTAEPMEVSEKQ.

Belongs to the peptidase C19 family. USP14/UBP6 subfamily.

The catalysed reaction is Thiol-dependent hydrolysis of ester, thioester, amide, peptide and isopeptide bonds formed by the C-terminal Gly of ubiquitin (a 76-residue protein attached to proteins as an intracellular targeting signal).. Proteasome-associated deubiquitinase which releases ubiquitin from the proteasome targeted ubiquitinated proteins. Ensures the regeneration of ubiquitin at the proteasome. The protein is Ubiquitin carboxyl-terminal hydrolase 14 (usp-14) of Caenorhabditis elegans.